Consider the following 463-residue polypeptide: Hexokinase-7 (463 aa).

The Hexokinase domain maps to Ala7–Ala456. The hexokinase small subdomain stretch occupies residues Asn62–Ile199. Positions 76, 77, and 78 each coordinate ADP. D-glucose contacts are provided by Thr165, Lys166, Asn200, and Asp201. Residues Asn200–Asp445 form a hexokinase large subdomain region. Position 224 (Thr224) interacts with ADP. D-glucose is bound by residues Asn227, Glu255, and Glu286. ADP is bound at residue Gly410.

It belongs to the hexokinase family. Expressed in roots, leaves, flowers, immature seeds and seed coat.

It is found in the cytoplasm. The enzyme catalyses a D-hexose + ATP = a D-hexose 6-phosphate + ADP + H(+). It catalyses the reaction D-fructose + ATP = D-fructose 6-phosphate + ADP + H(+). The catalysed reaction is D-glucose + ATP = D-glucose 6-phosphate + ADP + H(+). It participates in carbohydrate metabolism; hexose metabolism. It functions in the pathway carbohydrate degradation; glycolysis; D-glyceraldehyde 3-phosphate and glycerone phosphate from D-glucose: step 1/4. In terms of biological role, fructose and glucose phosphorylating enzyme. Functions in sugar signaling via a glycolysis-dependent manner under aerobic conditions, but its signaling role is suppressed when oxygen is deficient. In Oryza sativa subsp. japonica (Rice), this protein is Hexokinase-7 (HXK7).